Consider the following 76-residue polypeptide: Conotoxin Cal5a L2 (76 aa).

A signal peptide spans 1-22; sequence MRFYIGLMAALMLTSILRTDSA. A propeptide spanning residues 23 to 42 is cleaved from the precursor; that stretch reads SVGQTGTKSELALIERVIRQ. At P50 the chain carries 4-hydroxyproline. 4-hydroxyproline; partial is present on residues P58, P62, and P64.

Belongs to the conotoxin T superfamily. In terms of processing, contains 2 disulfide bonds that can be either 'C1-C3, C2-C4' or 'C1-C4, C2-C3', since these disulfide connectivities have been observed for conotoxins with cysteine framework V (for examples, see AC P0DQQ7 and AC P81755). Expressed by the venom duct.

It localises to the secreted. Its function is as follows. Probable neurotoxin with unknown target. Possibly targets ion channels. The polypeptide is Conotoxin Cal5a L2 (Californiconus californicus (California cone)).